A 275-amino-acid chain; its full sequence is Thiazole synthase (275 aa).

Lys108 functions as the Schiff-base intermediate with DXP in the catalytic mechanism. 1-deoxy-D-xylulose 5-phosphate contacts are provided by residues Gly169, 196-197 (AG), and 218-219 (NT).

The protein belongs to the ThiG family. Homotetramer. Forms heterodimers with either ThiH or ThiS.

The protein resides in the cytoplasm. The enzyme catalyses [ThiS sulfur-carrier protein]-C-terminal-Gly-aminoethanethioate + 2-iminoacetate + 1-deoxy-D-xylulose 5-phosphate = [ThiS sulfur-carrier protein]-C-terminal Gly-Gly + 2-[(2R,5Z)-2-carboxy-4-methylthiazol-5(2H)-ylidene]ethyl phosphate + 2 H2O + H(+). Its pathway is cofactor biosynthesis; thiamine diphosphate biosynthesis. Functionally, catalyzes the rearrangement of 1-deoxy-D-xylulose 5-phosphate (DXP) to produce the thiazole phosphate moiety of thiamine. Sulfur is provided by the thiocarboxylate moiety of the carrier protein ThiS. In vitro, sulfur can be provided by H(2)S. This chain is Thiazole synthase, found in Ralstonia nicotianae (strain ATCC BAA-1114 / GMI1000) (Ralstonia solanacearum).